A 354-amino-acid polypeptide reads, in one-letter code: Uroporphyrinogen decarboxylase (354 aa).

Residues 27–31, Asp77, Tyr154, Ser209, and His327 each bind substrate; that span reads RQAGR.

This sequence belongs to the uroporphyrinogen decarboxylase family. In terms of assembly, homodimer.

It is found in the cytoplasm. The catalysed reaction is uroporphyrinogen III + 4 H(+) = coproporphyrinogen III + 4 CO2. Its pathway is porphyrin-containing compound metabolism; protoporphyrin-IX biosynthesis; coproporphyrinogen-III from 5-aminolevulinate: step 4/4. In terms of biological role, catalyzes the decarboxylation of four acetate groups of uroporphyrinogen-III to yield coproporphyrinogen-III. The sequence is that of Uroporphyrinogen decarboxylase from Shewanella baltica (strain OS185).